An 808-amino-acid polypeptide reads, in one-letter code: Probable inorganic carbon transporter subunit DabA (808 aa).

Residues Cys335, Asp337, His497, and Cys512 each contribute to the Zn(2+) site.

The protein belongs to the inorganic carbon transporter (TC 9.A.2) DabA family. In terms of assembly, forms a complex with DabB. Requires Zn(2+) as cofactor.

The protein resides in the cell inner membrane. Its function is as follows. Part of an energy-coupled inorganic carbon pump. The chain is Probable inorganic carbon transporter subunit DabA from Rhodopseudomonas palustris (strain TIE-1).